Reading from the N-terminus, the 248-residue chain is Protein maestro (248 aa).

Residues 1–23 (MEQTRKIPNQPLPTPTSQSKKRR) form a disordered region. The HEAT repeat unit spans residues 128–163 (SFFIDITLQARTLLDDEDDSVRYSAFVLFGQLASFA).

In terms of tissue distribution, prominent expression seen in testis, brain, liver and heart. Weakly expressed in the kidney.

The protein resides in the nucleus. Its subcellular location is the nucleolus. This chain is Protein maestro (Mro), found in Mus musculus (Mouse).